We begin with the raw amino-acid sequence, 135 residues long: Protein KRTCAP2 homolog (135 aa).

The next 4 membrane-spanning stretches (helical) occupy residues M1–A21, P35–I55, T69–V89, and C93–I113.

Belongs to the KRTCAP2 family. As to quaternary structure, component of the oligosaccharyltransferase (OST) complex.

The protein resides in the membrane. Subunit of the oligosaccharyl transferase (OST) complex that catalyzes the initial transfer of a defined glycan (Glc(3)Man(9)GlcNAc(2) in eukaryotes) from the lipid carrier dolichol-pyrophosphate to an asparagine residue within an Asn-X-Ser/Thr consensus motif in nascent polypeptide chains, the first step in protein N-glycosylation. N-glycosylation occurs cotranslationally and the complex associates with the Sec61 complex at the channel-forming translocon complex that mediates protein translocation across the endoplasmic reticulum (ER). All subunits are required for a maximal enzyme activity. This is Protein KRTCAP2 homolog from Ixodes scapularis (Black-legged tick).